A 374-amino-acid polypeptide reads, in one-letter code: 2-oxoglutarate-Fe(II) type oxidoreductase ppzC (374 aa).

Residues 111 to 130 (KDGPFDSGYRGPGTQRVNPT) form a disordered region. Positions 220–330 (YPDASLEINF…RVSMPFFWGF (111 aa)) constitute a Fe2OG dioxygenase domain. Fe cation contacts are provided by His254, Asp256, and His311. Arg321 is a 2-oxoglutarate binding site.

It belongs to the iron/ascorbate-dependent oxidoreductase family. Fe(2+) serves as cofactor.

It catalyses the reaction peramine + 2-oxoglutarate + O2 = 8-hydroxyperamine + succinate + CO2. It participates in secondary metabolite biosynthesis. Functionally, 2-oxoglutarate-Fe(II) type oxidoreductase; part of the gene cluster that mediates the biosynthesis of pyrrolopyrazines, secondary metabolites showing insecticidal activity. Within the pathway, ppzC uses peramine as substrate for hydroxylation to yield the novel analog 8-hydroxyperamine. The single multifunctional NRPS ppzA is sufficient to produce peramine via condensation of 1-pyrroline-5-carboxylate and arginine, N-methylation of the alpha-amino group of arginine and reduction of the thioester and the cyclization to form an iminium ion resulting in release from the peptide synthetase. Deprotonation of this intermediate and oxidation of the pyrroline ring would give rise to peramine. In Epichloe species that produce only peramine, the peramine synthetase gene is not localized in a gene cluster, in contrast to Metarhizium species that contain additional pyrrolopyrazine biosynthesis genes. The 2-oxoglutarate-Fe(II) type oxidoreductase ppzC hydroxylates peramine to yield the newly identified compound 8-hydroxyperamine whereas ppzD converts L-proline into trans-4-hydroxy-L-proline, a precursor of peramine biosynthesis. In Metarhizium rileyi (strain RCEF 4871) (Nomuraea rileyi), this protein is 2-oxoglutarate-Fe(II) type oxidoreductase ppzC.